Here is a 102-residue protein sequence, read N- to C-terminus: NADH-quinone oxidoreductase subunit K (102 aa).

3 helical membrane passes run 6-26 (LEHGLAVAGVLFCLGLVGLMV), 30-50 (ILFVLMSLEIMMNAAALAFVV), and 62-82 (VMFILVISLAAAEASIGLAIL).

It belongs to the complex I subunit 4L family. As to quaternary structure, NDH-1 is composed of 13 different subunits. Subunits NuoA, H, J, K, L, M, N constitute the membrane sector of the complex.

Its subcellular location is the cell inner membrane. The catalysed reaction is a quinone + NADH + 5 H(+)(in) = a quinol + NAD(+) + 4 H(+)(out). Its function is as follows. NDH-1 shuttles electrons from NADH, via FMN and iron-sulfur (Fe-S) centers, to quinones in the respiratory chain. The immediate electron acceptor for the enzyme in this species is believed to be ubiquinone. Couples the redox reaction to proton translocation (for every two electrons transferred, four hydrogen ions are translocated across the cytoplasmic membrane), and thus conserves the redox energy in a proton gradient. This chain is NADH-quinone oxidoreductase subunit K, found in Pseudomonas syringae pv. tomato (strain ATCC BAA-871 / DC3000).